A 407-amino-acid chain; its full sequence is (R)-phenyllactyl-CoA dehydratase alpha subunit (407 aa).

A propeptide spanning residues 1–4 (MSDR) is cleaved from the precursor.

It belongs to the FldB/FldC dehydratase alpha/beta subunit family. As to quaternary structure, part of the heterotrimeric phenyllactate dehydratase complex FldABC, composed of (R)-phenyllactate CoA-transferase (FldA) and a heterodimeric (R)-phenyllactyl-CoA dehydratase (FldB and FldC). [4Fe-4S] cluster is required as a cofactor. No flavin could be detected in the FldABC complex, and the addition of FAD, FMN or riboflavin to the dehydratase do not increase enzymatic activity. serves as cofactor.

The enzyme catalyses (R)-3-phenyllactoyl-CoA = (E)-cinnamoyl-CoA + H2O. It carries out the reaction (R)-3-(4-hydroxyphenyl)lactoyl-CoA = (E)-4-coumaroyl-CoA + H2O. It catalyses the reaction (R)-3-(indol-3-yl)lactoyl-CoA = (E)-3-(indol-3-yl)acryloyl-CoA + H2O. The protein operates within amino-acid degradation; L-phenylalanine degradation. Functionally, component of the phenyllactate dehydratase complex FldABC that is involved in the fermentation of L-phenylalanine via a Stickland reaction. This complex catalyzes the reversible syn-dehydration of (R)-phenyllactate to (E)-cinnamate in two steps, a CoA-transfer from cinnamoyl-CoA to phenyllactate, catalyzed by FldA, followed by the dehydration of phenyllactyl-CoA to cinnamoyl-CoA, catalyzed by FldB and FldC. Requires the activator FldI to initiate catalysis. The sequence is that of (R)-phenyllactyl-CoA dehydratase alpha subunit from Clostridium sporogenes.